The primary structure comprises 206 residues: Synaptosomal-associated protein 25 (206 aa).

Over residues 1 to 20 (MAEDADMRNELEEMQRRADQ) the composition is skewed to basic and acidic residues. The interval 1–25 (MAEDADMRNELEEMQRRADQLADES) is disordered. Residues 1–75 (MAEDADMRNE…QINKDMKEAE (75 aa)) form an interaction with CENPF region. One can recognise a t-SNARE coiled-coil homology 1 domain in the interval 19–81 (DQLADESLES…KEAEKNSTDL (63 aa)). S-palmitoyl cysteine attachment occurs at residues Cys-85, Cys-88, Cys-90, and Cys-92. The segment at 111 to 120 (GVVASQPARV) is interaction with ZDHHC17. A Phosphothreonine modification is found at Thr-138. Positions 140–202 (DARENEMDEN…DEANQRATKM (63 aa)) constitute a t-SNARE coiled-coil homology 2 domain. Ser-154 and Ser-187 each carry phosphoserine.

Belongs to the SNAP-25 family. As to quaternary structure, part of the SNARE core complex containing SNAP25, VAMP2 and STX1A; this complex binds CPLX1. Found in a complex containing SYT1, SV2B and syntaxin-1. Found in a ternary complex with STX1A and VAMP8. Interacts with HSC70 and with SYT9, forming a complex with DNAJC5. The interaction with SYT9 is inhibited in presence of calcium. Isoform 1 and isoform 2 interact with BLOC1S6. Interacts with CENPF. Interacts with EQTN. Interacts with HGS. Interacts with KCNB1 (via N-terminus); reduces the voltage-dependent potassium channel KCNB1 activity in pancreatic beta cells. Interacts with OTOF. Interacts with RIMS1. Interacts with SNAPIN. Interacts with STXBP6. Interacts with TRIM9. Interacts with ZDHHC13 (via ANK repeats). Interacts with ZDHHC17 (via ANK repeats). Associates with the BLOC-1 complex. Interacts with PLCL1 (via C2 domain). Interacts with PRRT2; this interaction may impair the formation of the SNARE complex. Interacts with alpha-synuclein/SNCA. Interacts with PRPH2. Interacts with ROM1. Interacts with STX3. In terms of processing, palmitoylated. Cys-85 appears to be the main site, and palmitoylation is required for membrane association.

It is found in the cytoplasm. Its subcellular location is the perinuclear region. The protein localises to the cell membrane. It localises to the synapse. The protein resides in the synaptosome. It is found in the photoreceptor inner segment. Its function is as follows. t-SNARE involved in the molecular regulation of neurotransmitter release. May play an important role in the synaptic function of specific neuronal systems. Associates with proteins involved in vesicle docking and membrane fusion. Regulates plasma membrane recycling through its interaction with CENPF. Modulates the gating characteristics of the delayed rectifier voltage-dependent potassium channel KCNB1 in pancreatic beta cells. The protein is Synaptosomal-associated protein 25 (SNAP25) of Pongo abelii (Sumatran orangutan).